The primary structure comprises 64 residues: Large ribosomal subunit protein bL35 (64 aa).

It belongs to the bacterial ribosomal protein bL35 family.

The sequence is that of Large ribosomal subunit protein bL35 from Vibrio atlanticus (strain LGP32) (Vibrio splendidus (strain Mel32)).